A 544-amino-acid chain; its full sequence is ATP synthase subunit alpha (544 aa).

ATP is bound at residue 173–180 (GDRQTGKT). The segment at 513 to 544 (GSDGQIIGGGEPESDGEDVDVEQEQIVRQKRG) is disordered. Over residues 524–535 (PESDGEDVDVEQ) the composition is skewed to acidic residues.

It belongs to the ATPase alpha/beta chains family. In terms of assembly, F-type ATPases have 2 components, CF(1) - the catalytic core - and CF(0) - the membrane proton channel. CF(1) has five subunits: alpha(3), beta(3), gamma(1), delta(1), epsilon(1). CF(0) has three main subunits: a(1), b(2) and c(9-12). The alpha and beta chains form an alternating ring which encloses part of the gamma chain. CF(1) is attached to CF(0) by a central stalk formed by the gamma and epsilon chains, while a peripheral stalk is formed by the delta and b chains.

The protein resides in the cell membrane. The catalysed reaction is ATP + H2O + 4 H(+)(in) = ADP + phosphate + 5 H(+)(out). Functionally, produces ATP from ADP in the presence of a proton gradient across the membrane. The alpha chain is a regulatory subunit. The protein is ATP synthase subunit alpha of Beutenbergia cavernae (strain ATCC BAA-8 / DSM 12333 / CCUG 43141 / JCM 11478 / NBRC 16432 / NCIMB 13614 / HKI 0122).